The primary structure comprises 537 residues: CWF19-like protein 1 (537 aa).

The segment at 297–323 is disordered; the sequence is KQGRKRPSTGRDTRPPHAKQPRKPPQP.

This sequence belongs to the CWF19 family.

The polypeptide is CWF19-like protein 1 (Cwf19l1) (Mus musculus (Mouse)).